A 289-amino-acid chain; its full sequence is 2-hydroxy-6-oxononadienedioate/2-hydroxy-6-oxononatrienedioate hydrolase (289 aa).

The active-site Proton acceptor is His-269.

Belongs to the AB hydrolase superfamily. MhpC family. Homodimer.

It catalyses the reaction (2Z,4E)-2-hydroxy-6-oxonona-2,4-dienedioate + H2O = (2Z)-2-hydroxypenta-2,4-dienoate + succinate + H(+). It carries out the reaction (2Z,4E,7E)-2-hydroxy-6-oxonona-2,4,7-trienedioate + H2O = (2Z)-2-hydroxypenta-2,4-dienoate + fumarate + H(+). It participates in aromatic compound metabolism; 3-phenylpropanoate degradation. Functionally, catalyzes the cleavage of the C5-C6 bond of 2-hydroxy-6-oxononadienedioate and 2-hydroxy-6-oxononatrienedioate, a dienol ring fission product of the bacterial meta-cleavage pathway for degradation of phenylpropionic acid. The sequence is that of 2-hydroxy-6-oxononadienedioate/2-hydroxy-6-oxononatrienedioate hydrolase from Cupriavidus pinatubonensis (strain JMP 134 / LMG 1197) (Cupriavidus necator (strain JMP 134)).